A 162-amino-acid chain; its full sequence is Disulfide bond formation protein B (162 aa).

The Cytoplasmic segment spans residues 1–8; that stretch reads MTPLFRKA. Residues 9-25 traverse the membrane as a helical segment; sequence VWLLFAVSVCAFAGSLA. Topologically, residues 26–43 are periplasmic; that stretch reads AQYVLGMEPCVLCISQRL. Residues Cys-35 and Cys-38 are joined by a disulfide bond. The chain crosses the membrane as a helical span at residues 44–60; the sequence is CVLATALCAAIVLMCRP. Over 61–67 the chain is Cytoplasmic; the sequence is RRKAGGL. A helical transmembrane segment spans residues 68–85; that stretch reads FGAVFISIPAVTGISVAA. The Periplasmic segment spans residues 86–141; the sequence is YQLWLQSLPPGTAPSCGAPWTFRLKGWPLFDWFEPVVRGFGNCAEPDYLLGVALPV. Cys-101 and Cys-128 are disulfide-bonded. A helical membrane pass occupies residues 142-160; that stretch reads WSVAYFLAVALTVWWAWAR. At 161-162 the chain is on the cytoplasmic side; it reads AK.

It belongs to the DsbB family.

It localises to the cell inner membrane. In terms of biological role, required for disulfide bond formation in some periplasmic proteins. Acts by oxidizing the DsbA protein. This is Disulfide bond formation protein B from Neisseria meningitidis serogroup A / serotype 4A (strain DSM 15465 / Z2491).